Consider the following 184-residue polypeptide: ATP synthase subunit b, chloroplastic (184 aa).

The chain crosses the membrane as a helical span at residues 27 to 49; that stretch reads LATNLINLSVVLGVLIFFGKGVL.

It belongs to the ATPase B chain family. F-type ATPases have 2 components, F(1) - the catalytic core - and F(0) - the membrane proton channel. F(1) has five subunits: alpha(3), beta(3), gamma(1), delta(1), epsilon(1). F(0) has four main subunits: a(1), b(1), b'(1) and c(10-14). The alpha and beta chains form an alternating ring which encloses part of the gamma chain. F(1) is attached to F(0) by a central stalk formed by the gamma and epsilon chains, while a peripheral stalk is formed by the delta, b and b' chains.

Its subcellular location is the plastid. The protein localises to the chloroplast thylakoid membrane. Its function is as follows. F(1)F(0) ATP synthase produces ATP from ADP in the presence of a proton or sodium gradient. F-type ATPases consist of two structural domains, F(1) containing the extramembraneous catalytic core and F(0) containing the membrane proton channel, linked together by a central stalk and a peripheral stalk. During catalysis, ATP synthesis in the catalytic domain of F(1) is coupled via a rotary mechanism of the central stalk subunits to proton translocation. Component of the F(0) channel, it forms part of the peripheral stalk, linking F(1) to F(0). This is ATP synthase subunit b, chloroplastic from Manihot esculenta (Cassava).